Reading from the N-terminus, the 347-residue chain is Toluene-4-sulfonate monooxygenase system iron-sulfur subunit TsaM1 (347 aa).

Residues 7–109 enclose the Rieske domain; sequence WYVAAWDTEI…VVERNRLVWI (103 aa). Cysteine 48, histidine 50, cysteine 67, and histidine 70 together coordinate [2Fe-2S] cluster.

In terms of assembly, homotetramer. Part of the p-toluenesulfonate methyl-monooxygenase complex TsaBM, comprising the reductase TsaB and the oxygenase TsaM. The cofactor is [2Fe-2S] cluster.

The enzyme catalyses toluene-4-sulfonate + NADH + O2 + H(+) = 4-(hydroxymethyl)benzenesulfonate + NAD(+) + H2O. Functionally, involved in the toluene-4-sulfonate degradation pathway. Does not discriminate between the sulfonate and the carboxyl substituents and can also be involved in the p-toluenecarboxylate degradation pathway. Can use toluene-4-sulfonate, p-toluate, m-toluate and 4-ethylbenzoate as substrates, but not p-xylene, toluene and p-cresol. Also catalyzes the demethylation of 4-methoxybenzoate to 4-hydroxybenzoate. The sequence is that of Toluene-4-sulfonate monooxygenase system iron-sulfur subunit TsaM1 (tsaM1) from Comamonas testosteroni (Pseudomonas testosteroni).